The chain runs to 144 residues: Translation initiation factor 5A (144 aa).

Lys-38 carries the post-translational modification Hypusine.

Belongs to the eIF-5A family.

The protein resides in the cytoplasm. Functionally, functions by promoting the formation of the first peptide bond. The chain is Translation initiation factor 5A from Nanoarchaeum equitans (strain Kin4-M).